A 227-amino-acid polypeptide reads, in one-letter code: Translation initiation factor 6 (227 aa).

It belongs to the eIF-6 family.

Binds to the 50S ribosomal subunit and prevents its association with the 30S ribosomal subunit to form the 70S initiation complex. In Methanococcus vannielii (strain ATCC 35089 / DSM 1224 / JCM 13029 / OCM 148 / SB), this protein is Translation initiation factor 6.